The following is a 300-amino-acid chain: Rhodopsin (300 aa).

The Extracellular portion of the chain corresponds to 1–18 (LHMIHLHWYQYPPMNPMM). Residues 19 to 43 (YPLLLVFMLITGILCLAGNFVTIWV) form a helical membrane-spanning segment. Residues 44-55 (FMNTKSLRTPAN) lie on the Cytoplasmic side of the membrane. Residues 56 to 78 (LLVVNLAMSDFLMMFTMFPPMMV) traverse the membrane as a helical segment. The Extracellular segment spans residues 79–92 (TCYYHTWTLGATFC). A disulfide bridge connects residues C92 and C168. A helical membrane pass occupies residues 93 to 115 (QVYAFLGNLCGCASIWTMVFITF). A 'Ionic lock' involved in activated form stabilization motif is present at residues 116–118 (DRY). Over 116-134 (DRYNVIVKGVAGEPLSTKK) the chain is Cytoplasmic. Residues 135–155 (ASLWILTIWILSITWCIAPFF) form a helical membrane-spanning segment. Topologically, residues 156-181 (GWNRYVPEGNTGCGTDYLSEDILSRS) are extracellular. The helical transmembrane segment at 182–203 (YLYIYSTWVYFLPLAITIYCHV) threads the bilayer. The Cytoplasmic portion of the chain corresponds to 204 to 244 (FIIKAVAAHEKGMRDQAKKMGIKSLRNEEAQKTSAECRLAK). Residues 245-266 (IAMTTVALWFIAWTPYLLINWV) traverse the membrane as a helical segment. The Extracellular portion of the chain corresponds to 267-277 (GMFARSYLSPV). Residues 278–299 (YTIWGYVFAKANAVYNPIVYAI) form a helical membrane-spanning segment. An N6-(retinylidene)lysine modification is found at K287.

This sequence belongs to the G-protein coupled receptor 1 family. Opsin subfamily. In terms of assembly, homodimer. Interacts with GNAQ. Contains one covalently linked retinal chromophore.

It localises to the cell projection. The protein localises to the rhabdomere membrane. Photoreceptor required for image-forming vision at low light intensity. Can use both retinal and 3-dehydroretinal as visual pigment. Light-induced isomerization of 11-cis to all-trans retinal triggers a conformational change that activates signaling via G-proteins. Signaling via GNAQ probably mediates the activation of phospholipase C. This is Rhodopsin (RHO) from Cambarus maculatus (Freckled crayfish).